The primary structure comprises 236 residues: RING-H2 finger protein ATL7 (236 aa).

The chain crosses the membrane as a helical span at residues 31 to 51 (AFIFSVPICFTFIVLFVLYVI). Residues 111–153 (CSVCLGDYQAEEKLQQMPSCGHTFHMECIDLWLTSHTTCPLCR) form an RING-type; atypical zinc finger. The span at 176-196 (ENSNGGEASTQPDSQSATEAI) shows a compositional bias: polar residues. Residues 176–236 (ENSNGGEAST…SDGCCTCRLG (61 aa)) form a disordered region. Positions 197 to 221 (SHTDDVEEGNRDSQEVSKETEENDR) are enriched in basic and acidic residues.

The protein belongs to the RING-type zinc finger family. ATL subfamily.

Its subcellular location is the membrane. It carries out the reaction S-ubiquitinyl-[E2 ubiquitin-conjugating enzyme]-L-cysteine + [acceptor protein]-L-lysine = [E2 ubiquitin-conjugating enzyme]-L-cysteine + N(6)-ubiquitinyl-[acceptor protein]-L-lysine.. It participates in protein modification; protein ubiquitination. This Arabidopsis thaliana (Mouse-ear cress) protein is RING-H2 finger protein ATL7 (ATL7).